Reading from the N-terminus, the 265-residue chain is Undecaprenyl-diphosphatase (265 aa).

The next 7 membrane-spanning stretches (helical) occupy residues 38 to 58 (RSDF…CLAL), 75 to 95 (RDYV…GLIV), 108 to 128 (PVAW…HVAG), 135 to 155 (VVTW…GVFP), 181 to 201 (FVFM…LLEM), 215 to 235 (VAVA…WLLS), and 244 to 264 (VFAV…PAAA).

It belongs to the UppP family.

Its subcellular location is the cell inner membrane. The enzyme catalyses di-trans,octa-cis-undecaprenyl diphosphate + H2O = di-trans,octa-cis-undecaprenyl phosphate + phosphate + H(+). In terms of biological role, catalyzes the dephosphorylation of undecaprenyl diphosphate (UPP). Confers resistance to bacitracin. This chain is Undecaprenyl-diphosphatase, found in Xanthomonas oryzae pv. oryzae (strain MAFF 311018).